We begin with the raw amino-acid sequence, 361 residues long: Chitin synthase export chaperone (361 aa).

7 consecutive transmembrane segments (helical) span residues isoleucine 48–methionine 68, leucine 86–isoleucine 106, isoleucine 119–phenylalanine 139, leucine 150–alanine 170, threonine 184–isoleucine 204, tryptophan 218–valine 238, and histidine 250–tyrosine 270.

This sequence belongs to the CHS7 family. Interacts with CHS3.

It is found in the endoplasmic reticulum membrane. Functionally, chaperone required for the export of the chitin synthase CHS3 from the endoplasmic reticulum. This is Chitin synthase export chaperone (CHS7) from Cryptococcus neoformans var. neoformans serotype D (strain JEC21 / ATCC MYA-565) (Filobasidiella neoformans).